The following is a 209-amino-acid chain: Uridine kinase (209 aa).

12–19 (GGSASGKT) contacts ATP.

Belongs to the uridine kinase family.

Its subcellular location is the cytoplasm. It carries out the reaction uridine + ATP = UMP + ADP + H(+). It catalyses the reaction cytidine + ATP = CMP + ADP + H(+). It functions in the pathway pyrimidine metabolism; CTP biosynthesis via salvage pathway; CTP from cytidine: step 1/3. It participates in pyrimidine metabolism; UMP biosynthesis via salvage pathway; UMP from uridine: step 1/1. This chain is Uridine kinase, found in Chloroflexus aurantiacus (strain ATCC 29366 / DSM 635 / J-10-fl).